Consider the following 137-residue polypeptide: Ribosomal RNA large subunit methyltransferase H (137 aa).

Residues Leu-56, Gly-85, and 104–109 (LSPLTL) each bind S-adenosyl-L-methionine.

Belongs to the RNA methyltransferase RlmH family. In terms of assembly, homodimer.

It localises to the cytoplasm. The catalysed reaction is pseudouridine(1915) in 23S rRNA + S-adenosyl-L-methionine = N(3)-methylpseudouridine(1915) in 23S rRNA + S-adenosyl-L-homocysteine + H(+). Specifically methylates the pseudouridine at position 1915 (m3Psi1915) in 23S rRNA. The polypeptide is Ribosomal RNA large subunit methyltransferase H (Thermus thermophilus (strain ATCC 27634 / DSM 579 / HB8)).